Reading from the N-terminus, the 247-residue chain is 5'-nucleotidase SurE (247 aa).

Residues Asp-8, Asp-9, Ser-39, and Asn-95 each contribute to the a divalent metal cation site.

Belongs to the SurE nucleotidase family. It depends on a divalent metal cation as a cofactor.

It localises to the cytoplasm. It catalyses the reaction a ribonucleoside 5'-phosphate + H2O = a ribonucleoside + phosphate. Its function is as follows. Nucleotidase that shows phosphatase activity on nucleoside 5'-monophosphates. The chain is 5'-nucleotidase SurE from Thermotoga petrophila (strain ATCC BAA-488 / DSM 13995 / JCM 10881 / RKU-1).